The chain runs to 509 residues: MASVISSSPFLCKSSSKSDLGISSFPKSSQISIHRCQKKSISRKIVSVMAPQKDRSPGTTGSVKTGMTMTEKILARASEKSLVVPGDNIWVNVDVLMTHDVCGPGAFGIFKREFGEKAKVWDPEKIVVIPDHYIFTADKRANRNVDIMREHCREQNIKYFYDITDLGNFKANPDYKGVCHVALAQEGHCRPGEVLLGTDSHTCTAGAFGQFATGIGNTDAGFVLGTGKILLKVPPTMRFILDGEMPSYLQAKDLILQIIGEISVAGATYKTMEFSGTTIESLSMEERMTLCNMVVEAGGKNGVIPPDATTLNYVENRTSVPFEPVYSDGNASFVADYRFDVSKLEPVVAKPHSPDNRALARECKDVKIDRVYIGSCTGGKTEDFMAAAKLFHAAGRKVKVPTFLVPATQKVWMDVYALPVPGAGGKTCAQIFEEAGCDTPASPSCGACLGGPADTYARLNEPQVCVSTTNRNFPGRMGHKEGQIYLASPYTAAASALTGRVADPREFLQ.

A compositionally biased stretch (low complexity) spans 1–24; the sequence is MASVISSSPFLCKSSSKSDLGISS. Positions 1–25 are disordered; that stretch reads MASVISSSPFLCKSSSKSDLGISSF. A chloroplast-targeting transit peptide spans 1–47; the sequence is MASVISSSPFLCKSSSKSDLGISSFPKSSQISIHRCQKKSISRKIVS. [4Fe-4S] cluster contacts are provided by cysteine 376, cysteine 445, and cysteine 448.

Belongs to the aconitase/IPM isomerase family. In terms of assembly, heterodimer of the large LEUC/IIL1 subunit and the small LEUD (SSU1, SSU2 or SSU3) subunits. It depends on [4Fe-4S] cluster as a cofactor. As to expression, expressed in roots, leaves, stems and flowers. Expressed at low levels in siliques.

Its subcellular location is the plastid. It localises to the chloroplast stroma. It carries out the reaction (2R,3S)-3-isopropylmalate = (2S)-2-isopropylmalate. It catalyses the reaction a 2-(omega-methylsulfanyl)alkylmalate = a 2-(omega-methylsulfanyl)alkylmaleate + H2O. The catalysed reaction is 2-(3-methylsulfanyl)propylmalate = 2-(2-methylsulfanyl)propylmaleate + H2O. The enzyme catalyses a 3-(omega-methylsulfanyl)alkylmalate = a 2-(omega-methylsulfanyl)alkylmaleate + H2O. It carries out the reaction 2-(2-methylsulfanyl)ethylmalate = 2-(2-methylsulfanyl)ethylmaleate + H2O. It catalyses the reaction 3-(2-methylsulfanyl)ethylmalate = 2-(2-methylsulfanyl)ethylmaleate + H2O. The catalysed reaction is 3-(3-methylsulfanyl)propylmalate = 2-(2-methylsulfanyl)propylmaleate + H2O. It participates in amino-acid biosynthesis; L-leucine biosynthesis; L-leucine from 3-methyl-2-oxobutanoate: step 2/4. Catalyzes the isomerization between 2-isopropylmalate and 3-isopropylmalate, via the formation of 2-isopropylmaleate. Functions in both the biosynthesis of leucine and in the methionine chain elongation pathway of aliphatic glucosinolate formation. This chain is 3-isopropylmalate dehydratase large subunit, chloroplastic, found in Arabidopsis thaliana (Mouse-ear cress).